We begin with the raw amino-acid sequence, 271 residues long: Calcium-binding protein 4 (271 aa).

Residues 1-105 (MATEHNVQLV…RSDPQQDAAQ (105 aa)) are disordered. Position 37 is a phosphoserine; by PKC/PRKCZ (S37). Residues 45 to 67 (GSQKASSGDQSSSQGSEASGSSK) show a composition bias toward low complexity. The segment covering 87-96 (ASHRHSHRHR) has biased composition (basic residues). EF-hand domains follow at residues 125-160 (EELEELQAAFEEFDTDQDGYIGYRELGDCMRTLGYM), 179-196 (GFVDFEEFVELISPKLRE), 202-237 (LGVRELRIAFREFDKDRDGRITVAELRQAAPALLGE), and 239-271 (LEGTELDEMLREMDLNGDGTIDFDEFVMMLSTG). Residues D138, D140, D142, Y144, and E149 each coordinate Ca(2+). The Ca(2+) site is built by D215, D217, D219, R221, E226, D252, N254, D256, T258, and E263.

As to quaternary structure, interacts with CACNA1F and CACNA1D (via IQ domain) in a calcium independent manner. Interacts (via N-terminus) with UNC119. In terms of processing, phosphorylated. Phosphorylation levels change with the light conditions and regulate the activity, but has no effect on calcium binding. In terms of tissue distribution, expressed in retina and in the inner hair cells (IHC) of the cochlea.

The protein localises to the cytoplasm. Its subcellular location is the presynapse. Involved in normal synaptic function through regulation of Ca(2+) influx and neurotransmitter release in photoreceptor synaptic terminals and in auditory transmission. Modulator of CACNA1D and CACNA1F, suppressing the calcium-dependent inactivation and shifting the activation range to more hyperpolarized voltages. The chain is Calcium-binding protein 4 (Cabp4) from Mus musculus (Mouse).